We begin with the raw amino-acid sequence, 80 residues long: Exodeoxyribonuclease 7 small subunit (80 aa).

Belongs to the XseB family. Heterooligomer composed of large and small subunits.

The protein resides in the cytoplasm. It carries out the reaction Exonucleolytic cleavage in either 5'- to 3'- or 3'- to 5'-direction to yield nucleoside 5'-phosphates.. Its function is as follows. Bidirectionally degrades single-stranded DNA into large acid-insoluble oligonucleotides, which are then degraded further into small acid-soluble oligonucleotides. This chain is Exodeoxyribonuclease 7 small subunit, found in Pseudomonas fluorescens (strain ATCC BAA-477 / NRRL B-23932 / Pf-5).